The primary structure comprises 243 residues: Uridylate kinase (243 aa).

12–15 (KLSG) is an ATP binding site. An involved in allosteric activation by GTP region spans residues 20-25 (GAKGFG). Positions 55 and 59 each coordinate ATP. Residues D74 and 135 to 142 (TGNPYFTT) each bind UMP. ATP-binding residues include Q163, Y169, and D172.

This sequence belongs to the UMP kinase family. As to quaternary structure, homohexamer.

It is found in the cytoplasm. The catalysed reaction is UMP + ATP = UDP + ADP. It participates in pyrimidine metabolism; CTP biosynthesis via de novo pathway; UDP from UMP (UMPK route): step 1/1. Allosterically activated by GTP. Inhibited by UTP. In terms of biological role, catalyzes the reversible phosphorylation of UMP to UDP. This chain is Uridylate kinase, found in Symbiobacterium thermophilum (strain DSM 24528 / JCM 14929 / IAM 14863 / T).